The chain runs to 411 residues: MKEVLRKVKDASRVTATLNGEIKRKILKEMAEALEQNSSLIINENKKDLKYANENNLSAALIDRLYLDEKRIGSMADALRDIATLKDPVGRVIDGWMLDNGLRIEKVKIPIGVIGIIYESRPNVTSDAAGLCFMSGNACILKGGKEAMYSNIAIINVLRDVLERNSLPKDAVSLLPDYSREGVYKLIQEDKYVDLIIPRGGEKLIKFVSENSKVPVVKHDKGLCHIYIHKDANIDEAVKISVNAKVQRPGVCNAVETLLVDESVKNEILPKLKAEMEKEGVELRGCEKTLEVIDINKATEEDWNTEYLDKILSIKVVRDLNEAIEHIQTYGSGHSDSIITENYSASEEFLNRVDSACVYVNASTRFTDGGEFGFGAEVGISTNKLHARGPMGIDDLTTYKYKIYGNGQIRE.

Belongs to the gamma-glutamyl phosphate reductase family.

It localises to the cytoplasm. The enzyme catalyses L-glutamate 5-semialdehyde + phosphate + NADP(+) = L-glutamyl 5-phosphate + NADPH + H(+). It participates in amino-acid biosynthesis; L-proline biosynthesis; L-glutamate 5-semialdehyde from L-glutamate: step 2/2. In terms of biological role, catalyzes the NADPH-dependent reduction of L-glutamate 5-phosphate into L-glutamate 5-semialdehyde and phosphate. The product spontaneously undergoes cyclization to form 1-pyrroline-5-carboxylate. The protein is Gamma-glutamyl phosphate reductase of Nautilia profundicola (strain ATCC BAA-1463 / DSM 18972 / AmH).